A 321-amino-acid polypeptide reads, in one-letter code: Cytochrome c biogenesis protein CcsA (321 aa).

Transmembrane regions (helical) follow at residues valine 17–leucine 37, methionine 46–leucine 63, leucine 71–phenylalanine 91, leucine 98–leucine 118, methionine 143–isoleucine 163, isoleucine 225–asparagine 245, threonine 259–histidine 273, and alanine 286–leucine 306.

It belongs to the CcmF/CycK/Ccl1/NrfE/CcsA family. As to quaternary structure, may interact with Ccs1.

It is found in the plastid. The protein resides in the chloroplast thylakoid membrane. Required during biogenesis of c-type cytochromes (cytochrome c6 and cytochrome f) at the step of heme attachment. In Morus indica (Mulberry), this protein is Cytochrome c biogenesis protein CcsA.